The chain runs to 486 residues: N-succinylglutamate 5-semialdehyde dehydrogenase (486 aa).

220–225 (GSSRTG) is a binding site for NAD(+). Catalysis depends on residues E243 and C277.

The protein belongs to the aldehyde dehydrogenase family. AstD subfamily.

The catalysed reaction is N-succinyl-L-glutamate 5-semialdehyde + NAD(+) + H2O = N-succinyl-L-glutamate + NADH + 2 H(+). It participates in amino-acid degradation; L-arginine degradation via AST pathway; L-glutamate and succinate from L-arginine: step 4/5. Catalyzes the NAD-dependent reduction of succinylglutamate semialdehyde into succinylglutamate. The protein is N-succinylglutamate 5-semialdehyde dehydrogenase of Shewanella baltica (strain OS155 / ATCC BAA-1091).